A 596-amino-acid chain; its full sequence is Alpha-1,3-galactosidase A (596 aa).

Residues 1 to 21 (MQNPVASLLFILAMLTGPCPA) form the signal peptide. Residues 23–57 (DYPERTERTQSAGNHVWHIDPDKGNDGNPGTAPST) are disordered. PbH1 repeat units follow at residues 351–373 (RGKI…NVHG), 482–504 (RKPV…LVED), 515–537 (VRNM…QIVP), and 547–569 (HRNI…RIRH).

The protein belongs to the glycosyl hydrolase 110 family. A subfamily.

The catalysed reaction is Hydrolysis of terminal, non-reducing branched (1-&gt;3)-alpha-D-galactosidic residues, producing free D-galactose.. It catalyses the reaction Hydrolysis of terminal, non-reducing alpha-D-galactose residues in alpha-D-galactosides, including galactose oligosaccharides, galactomannans and galactolipids.. In terms of biological role, alpha-galactosidase that specifically removes branched alpha-1,3-linked galactose residues present in blood group B antigens. Has no activity toward linear alpha-1,3-linked galactose residues. This Akkermansia muciniphila (strain ATCC BAA-835 / DSM 22959 / JCM 33894 / BCRC 81048 / CCUG 64013 / CIP 107961 / Muc) protein is Alpha-1,3-galactosidase A (glaA).